The following is a 690-amino-acid chain: Glycine--tRNA ligase beta subunit (690 aa).

The protein belongs to the class-II aminoacyl-tRNA synthetase family. As to quaternary structure, tetramer of two alpha and two beta subunits.

Its subcellular location is the cytoplasm. It carries out the reaction tRNA(Gly) + glycine + ATP = glycyl-tRNA(Gly) + AMP + diphosphate. In Syntrophus aciditrophicus (strain SB), this protein is Glycine--tRNA ligase beta subunit.